The following is a 303-amino-acid chain: Polyisoprenyl-teichoic acid--peptidoglycan teichoic acid transferase TagU (303 aa).

Over 1–4 (MKKK) the chain is Cytoplasmic. The helical; Signal-anchor for type II membrane protein transmembrane segment at 5-25 (ILFWVLGILGVLIIGGGIYAY) threads the bilayer. Residues 26 to 303 (NVYSSVSNTL…KLRSHLEVTK (278 aa)) are Extracellular-facing.

The protein belongs to the LytR/CpsA/Psr (LCP) family.

It is found in the cell membrane. It participates in cell wall biogenesis. In terms of biological role, may catalyze the final step in cell wall teichoic acid biosynthesis, the transfer of the anionic cell wall polymers (APs) from their lipid-linked precursor to the cell wall peptidoglycan (PG). In Bacillus cereus (strain AH820), this protein is Polyisoprenyl-teichoic acid--peptidoglycan teichoic acid transferase TagU.